The chain runs to 111 residues: BET1-like protein (111 aa).

At 1-86 (MADWTRAQSS…MARSGRDNRK (86 aa)) the chain is on the cytoplasmic side. Ser9 and Ser37 each carry phosphoserine. The t-SNARE coiled-coil homology domain occupies 15 to 77 (DILDRENKRM…TGSVKRFSTM (63 aa)). Residues 87-107 (LLCGMAVVLIVAFFILSYLLS) form a helical; Anchor for type IV membrane protein membrane-spanning segment. Topologically, residues 108–111 (RTRT) are lumenal.

In terms of assembly, component of a SNARE complex consisting of STX5, YKT6, GOSR1 and BET1L. Interacts with STX5.

It is found in the golgi apparatus membrane. The protein localises to the golgi apparatus. It localises to the trans-Golgi network membrane. Vesicle SNARE required for targeting and fusion of retrograde transport vesicles with the Golgi complex. Required for the integrity of the Golgi complex. The polypeptide is BET1-like protein (Mus musculus (Mouse)).